The following is a 188-amino-acid chain: Threonylcarbamoyl-AMP synthase (188 aa).

One can recognise a YrdC-like domain in the interval 3 to 188; the sequence is QLSSTQVTPV…RSGLVLRNGQ (186 aa).

Belongs to the SUA5 family. TsaC subfamily.

It is found in the cytoplasm. It carries out the reaction L-threonine + hydrogencarbonate + ATP = L-threonylcarbamoyladenylate + diphosphate + H2O. Required for the formation of a threonylcarbamoyl group on adenosine at position 37 (t(6)A37) in tRNAs that read codons beginning with adenine. Catalyzes the conversion of L-threonine, HCO(3)(-)/CO(2) and ATP to give threonylcarbamoyl-AMP (TC-AMP) as the acyladenylate intermediate, with the release of diphosphate. The protein is Threonylcarbamoyl-AMP synthase of Shewanella denitrificans (strain OS217 / ATCC BAA-1090 / DSM 15013).